The primary structure comprises 386 residues: DNA-directed RNA polymerase subunit Rpo1C (386 aa).

The protein belongs to the RNA polymerase beta' chain family. Part of the RNA polymerase complex.

The protein resides in the cytoplasm. It carries out the reaction RNA(n) + a ribonucleoside 5'-triphosphate = RNA(n+1) + diphosphate. Functionally, DNA-dependent RNA polymerase (RNAP) catalyzes the transcription of DNA into RNA using the four ribonucleoside triphosphates as substrates. Forms part of the jaw domain. The sequence is that of DNA-directed RNA polymerase subunit Rpo1C from Methanococcus maripaludis (strain C5 / ATCC BAA-1333).